We begin with the raw amino-acid sequence, 814 residues long: Exostosin-like-3 homolog (814 aa).

Residues 1–14 (MAIKLNGSSRSFVP) lie on the Cytoplasmic side of the membrane. The chain crosses the membrane as a helical; Signal-anchor for type II membrane protein span at residues 15 to 35 (SLRVSAFLIFIFFVITYIIIY). 6 N-linked (GlcNAc...) asparagine glycosylation sites follow: Asn-36, Asn-227, Asn-297, Asn-322, Asn-454, and Asn-492. At 36-814 (NVSFSEPSWI…QNHQKCFKYV (779 aa)) the chain is on the lumenal side. Residues Arg-570, Asn-595, Asn-620, Arg-625, Asp-641, Asp-642, and Asp-643 each contribute to the UDP-N-acetyl-alpha-D-glucosamine site. Position 643 (Asp-643) interacts with Mn(2+). Asn-685 carries N-linked (GlcNAc...) asparagine glycosylation. Cys-726 and Cys-774 form a disulfide bridge. Residues Glu-727, Asp-728, and Arg-771 each coordinate UDP-N-acetyl-alpha-D-glucosamine. The active site involves Asp-728.

It belongs to the glycosyltransferase 47 family. In terms of assembly, interacts with rib-1. Mn(2+) serves as cofactor.

The protein resides in the endoplasmic reticulum membrane. It localises to the golgi apparatus membrane. It catalyses the reaction 3-O-(beta-D-GlcA-(1-&gt;3)-beta-D-Gal-(1-&gt;3)-beta-D-Gal-(1-&gt;4)-beta-D-Xyl)-L-seryl-[protein] + UDP-N-acetyl-alpha-D-glucosamine = 3-O-(alpha-D-GlcNAc-(1-&gt;4)-beta-D-GlcA-(1-&gt;3)-beta-D-Gal-(1-&gt;3)-beta-D-Gal-(1-&gt;4)-beta-D-Xyl)-L-seryl-[protein] + UDP + H(+). The catalysed reaction is 3-O-{[(1-&gt;4)-beta-D-GlcA-(1-&gt;4)-alpha-D-GlcNAc](n)-(1-&gt;4)-beta-D-GlcA-(1-&gt;3)-beta-D-Gal-(1-&gt;3)-beta-D-Gal-(1-&gt;4)-beta-D-Xyl}-L-seryl-[protein] + UDP-N-acetyl-alpha-D-glucosamine = 3-O-{alpha-D-GlcNAc-[(1-&gt;4)-beta-D-GlcA-(1-&gt;4)-alpha-D-GlcNAc](n)-(1-&gt;4)-beta-D-GlcA-(1-&gt;3)-beta-D-Gal-(1-&gt;3)-beta-D-Gal-(1-&gt;4)-beta-D-Xyl}-L-seryl-[protein] + UDP + H(+). The enzyme catalyses 3-O-{alpha-D-GlcNAc-[(1-&gt;4)-beta-D-GlcA-(1-&gt;4)-alpha-D-GlcNAc](n)-(1-&gt;4)-beta-D-GlcA-(1-&gt;3)-beta-D-Gal-(1-&gt;3)-beta-D-Gal-(1-&gt;4)-beta-D-Xyl}-L-seryl-[protein] + UDP-alpha-D-glucuronate = 3-O-{[(1-&gt;4)-beta-D-GlcA-(1-&gt;4)-alpha-D-GlcNAc](n+1)-(1-&gt;4)-beta-D-GlcA-(1-&gt;3)-beta-D-Gal-(1-&gt;3)-beta-D-Gal-(1-&gt;4)-beta-D-Xyl}-L-seryl-[protein] + UDP + H(+). The protein operates within glycan metabolism; heparan sulfate biosynthesis. With respect to regulation, binding to rib-1 is required for GlcAT-II activity and for increasing GlcNAc-II activity in vitro. Functionally, glycosyltransferase required for the biosynthesis of heparan sulfate. Initiates heparan sulfate synthesis by transferring GlcNAc to the (GlcA-Gal-Gal-Xyl-)Ser core linker (GlcNAcT-I activity). In association with rib-1, is also responsible for the alternating addition of beta-1-4-linked glucuronic acid (GlcA) and alpha-1-4-linked N-acetylglucosamine (GlcNAc) units to nascent heparan sulfate chains (GlcNAcT-II and GlcAT-II activities). Required for normal ventral epidermal enclosure during the early stages of embryonic development. In addition, involved in the elongation of the pharyngeal isthmus during the later stages of embryonic development. Involved in the directed migration of hermaphrodite-specific neurons. The polypeptide is Exostosin-like-3 homolog (rib-2) (Caenorhabditis elegans).